Here is a 142-residue protein sequence, read N- to C-terminus: Large ribosomal subunit protein uL13 (142 aa).

Belongs to the universal ribosomal protein uL13 family. As to quaternary structure, part of the 50S ribosomal subunit.

In terms of biological role, this protein is one of the early assembly proteins of the 50S ribosomal subunit, although it is not seen to bind rRNA by itself. It is important during the early stages of 50S assembly. The polypeptide is Large ribosomal subunit protein uL13 (Pseudomonas fluorescens (strain Pf0-1)).